The chain runs to 236 residues: Uridylate kinase (236 aa).

12-15 (KLSG) is an ATP binding site. The involved in allosteric activation by GTP stretch occupies residues 20–25 (GEKGFG). Position 54 (Gly54) interacts with UMP. ATP contacts are provided by Gly55 and Arg59. Residues Asp72 and 133–140 (TGNPYFST) each bind UMP. ATP contacts are provided by Asn161, Tyr166, and Asp169.

It belongs to the UMP kinase family. As to quaternary structure, homohexamer.

It is found in the cytoplasm. It catalyses the reaction UMP + ATP = UDP + ADP. It participates in pyrimidine metabolism; CTP biosynthesis via de novo pathway; UDP from UMP (UMPK route): step 1/1. With respect to regulation, allosterically activated by GTP. Inhibited by UTP. Its function is as follows. Catalyzes the reversible phosphorylation of UMP to UDP. The sequence is that of Uridylate kinase from Alkaliphilus metalliredigens (strain QYMF).